The following is a 337-amino-acid chain: Dihydroorotate dehydrogenase (quinone) (337 aa).

Residues 62 to 66 and threonine 86 contribute to the FMN site; that span reads AGLDK. A substrate-binding site is contributed by lysine 66. Residue 111–115 coordinates substrate; that stretch reads NRFGF. FMN is bound by residues asparagine 139 and asparagine 172. Asparagine 172 is a binding site for substrate. Serine 175 functions as the Nucleophile in the catalytic mechanism. Asparagine 177 serves as a coordination point for substrate. FMN is bound by residues lysine 217 and threonine 245. Position 246-247 (246-247) interacts with substrate; that stretch reads NT. Residues glycine 268, glycine 297, and 318–319 contribute to the FMN site; that span reads YS.

Belongs to the dihydroorotate dehydrogenase family. Type 2 subfamily. In terms of assembly, monomer. FMN is required as a cofactor.

The protein localises to the cell membrane. The enzyme catalyses (S)-dihydroorotate + a quinone = orotate + a quinol. Its pathway is pyrimidine metabolism; UMP biosynthesis via de novo pathway; orotate from (S)-dihydroorotate (quinone route): step 1/1. Its function is as follows. Catalyzes the conversion of dihydroorotate to orotate with quinone as electron acceptor. The polypeptide is Dihydroorotate dehydrogenase (quinone) (Methylobacillus flagellatus (strain ATCC 51484 / DSM 6875 / VKM B-1610 / KT)).